The sequence spans 488 residues: Bifunctional protein GlmU (488 aa).

The interval 1 to 237 (MPRTRTPLAA…VEEASGVNDR (237 aa)) is pyrophosphorylase. UDP-N-acetyl-alpha-D-glucosamine contacts are provided by residues 13–16 (LAAG), Lys-27, Gln-82, 87–88 (GT), 110–112 (SGD), Gly-149, Glu-164, Asn-179, and Asn-235. A Mg(2+)-binding site is contributed by Asp-112. Asn-235 contributes to the Mg(2+) binding site. The interval 238-258 (VELSRANRVMVGRLAEAFMRA) is linker. The segment at 259–488 (GVTIEDPARF…KGRPAARRAS (230 aa)) is N-acetyltransferase. UDP-N-acetyl-alpha-D-glucosamine is bound by residues Arg-341 and Lys-359. The active-site Proton acceptor is the His-371. UDP-N-acetyl-alpha-D-glucosamine-binding residues include Tyr-374 and Asn-385. Residues Ala-388, 394-395 (NY), Ser-413, Ala-431, and Arg-448 each bind acetyl-CoA. A disordered region spans residues 459 to 488 (AQRQAEKQMKGTATGPASARKGRPAARRAS). The segment covering 478-488 (RKGRPAARRAS) has biased composition (basic residues).

The protein in the N-terminal section; belongs to the N-acetylglucosamine-1-phosphate uridyltransferase family. This sequence in the C-terminal section; belongs to the transferase hexapeptide repeat family. Homotrimer. It depends on Mg(2+) as a cofactor.

It localises to the cytoplasm. It catalyses the reaction alpha-D-glucosamine 1-phosphate + acetyl-CoA = N-acetyl-alpha-D-glucosamine 1-phosphate + CoA + H(+). The enzyme catalyses N-acetyl-alpha-D-glucosamine 1-phosphate + UTP + H(+) = UDP-N-acetyl-alpha-D-glucosamine + diphosphate. It participates in nucleotide-sugar biosynthesis; UDP-N-acetyl-alpha-D-glucosamine biosynthesis; N-acetyl-alpha-D-glucosamine 1-phosphate from alpha-D-glucosamine 6-phosphate (route II): step 2/2. The protein operates within nucleotide-sugar biosynthesis; UDP-N-acetyl-alpha-D-glucosamine biosynthesis; UDP-N-acetyl-alpha-D-glucosamine from N-acetyl-alpha-D-glucosamine 1-phosphate: step 1/1. It functions in the pathway bacterial outer membrane biogenesis; LPS lipid A biosynthesis. In terms of biological role, catalyzes the last two sequential reactions in the de novo biosynthetic pathway for UDP-N-acetylglucosamine (UDP-GlcNAc). The C-terminal domain catalyzes the transfer of acetyl group from acetyl coenzyme A to glucosamine-1-phosphate (GlcN-1-P) to produce N-acetylglucosamine-1-phosphate (GlcNAc-1-P), which is converted into UDP-GlcNAc by the transfer of uridine 5-monophosphate (from uridine 5-triphosphate), a reaction catalyzed by the N-terminal domain. This is Bifunctional protein GlmU from Anaeromyxobacter sp. (strain K).